A 469-amino-acid polypeptide reads, in one-letter code: Cysteine--tRNA ligase (469 aa).

Position 33 (C33) interacts with Zn(2+). The 'HIGH' region signature appears at 35-45; it reads ATVQGLPHIGH. Residues C211, H236, and E240 each contribute to the Zn(2+) site. The 'KMSKS' region motif lies at 267-271; the sequence is KMSKS. K270 is a binding site for ATP.

Belongs to the class-I aminoacyl-tRNA synthetase family. In terms of assembly, monomer. Requires Zn(2+) as cofactor.

It localises to the cytoplasm. The enzyme catalyses tRNA(Cys) + L-cysteine + ATP = L-cysteinyl-tRNA(Cys) + AMP + diphosphate. The polypeptide is Cysteine--tRNA ligase (cysS) (Mycobacterium bovis (strain ATCC BAA-935 / AF2122/97)).